A 384-amino-acid polypeptide reads, in one-letter code: Chaperone protein DnaJ (384 aa).

One can recognise a J domain in the interval 5–70 (DYYEVLGVAR…QKKAAYDRFG (66 aa)). The CR-type zinc-finger motif lies at 138–216 (GAQKTINVPG…CRGAGRVQKE (79 aa)). Zn(2+) is bound by residues C151, C154, C168, C171, C190, C193, C204, and C207. 4 CXXCXGXG motif repeats span residues 151 to 158 (CAACNGTG), 168 to 175 (CPTCSGMG), 190 to 197 (CPTCSGHG), and 204 to 211 (CQECRGAG). The disordered stretch occupies residues 300-322 (KVPPGTQSGKQLRLRGKGMPPLR).

Belongs to the DnaJ family. Homodimer. Requires Zn(2+) as cofactor.

The protein localises to the cytoplasm. Its function is as follows. Participates actively in the response to hyperosmotic and heat shock by preventing the aggregation of stress-denatured proteins and by disaggregating proteins, also in an autonomous, DnaK-independent fashion. Unfolded proteins bind initially to DnaJ; upon interaction with the DnaJ-bound protein, DnaK hydrolyzes its bound ATP, resulting in the formation of a stable complex. GrpE releases ADP from DnaK; ATP binding to DnaK triggers the release of the substrate protein, thus completing the reaction cycle. Several rounds of ATP-dependent interactions between DnaJ, DnaK and GrpE are required for fully efficient folding. Also involved, together with DnaK and GrpE, in the DNA replication of plasmids through activation of initiation proteins. This chain is Chaperone protein DnaJ, found in Paracoccus denitrificans (strain Pd 1222).